The following is a 335-amino-acid chain: Tetraacyldisaccharide 4'-kinase (335 aa).

58–65 (TAGGSGKT) contacts ATP.

Belongs to the LpxK family.

It carries out the reaction a lipid A disaccharide + ATP = a lipid IVA + ADP + H(+). Its pathway is glycolipid biosynthesis; lipid IV(A) biosynthesis; lipid IV(A) from (3R)-3-hydroxytetradecanoyl-[acyl-carrier-protein] and UDP-N-acetyl-alpha-D-glucosamine: step 6/6. Functionally, transfers the gamma-phosphate of ATP to the 4'-position of a tetraacyldisaccharide 1-phosphate intermediate (termed DS-1-P) to form tetraacyldisaccharide 1,4'-bis-phosphate (lipid IVA). This is Tetraacyldisaccharide 4'-kinase from Shewanella frigidimarina (strain NCIMB 400).